Reading from the N-terminus, the 398-residue chain is tRNA(Ile)-lysidine synthase (398 aa).

Ser25–Ser30 contributes to the ATP binding site.

This sequence belongs to the tRNA(Ile)-lysidine synthase family.

The protein resides in the cytoplasm. The enzyme catalyses cytidine(34) in tRNA(Ile2) + L-lysine + ATP = lysidine(34) in tRNA(Ile2) + AMP + diphosphate + H(+). In terms of biological role, ligates lysine onto the cytidine present at position 34 of the AUA codon-specific tRNA(Ile) that contains the anticodon CAU, in an ATP-dependent manner. Cytidine is converted to lysidine, thus changing the amino acid specificity of the tRNA from methionine to isoleucine. This Francisella tularensis subsp. tularensis (strain SCHU S4 / Schu 4) protein is tRNA(Ile)-lysidine synthase.